The chain runs to 480 residues: Cysteine--tRNA ligase (480 aa).

Cys29 is a Zn(2+) binding site. The short motif at 31–41 (PTVYADPHLGH) is the 'HIGH' region element. Zn(2+)-binding residues include Cys220, His245, and Glu249. The 'KMSKS' region signature appears at 276–280 (KMAKS). Lys279 provides a ligand contact to ATP.

This sequence belongs to the class-I aminoacyl-tRNA synthetase family. As to quaternary structure, monomer. Zn(2+) serves as cofactor.

It is found in the cytoplasm. It catalyses the reaction tRNA(Cys) + L-cysteine + ATP = L-cysteinyl-tRNA(Cys) + AMP + diphosphate. The chain is Cysteine--tRNA ligase from Thermus thermophilus (strain ATCC 27634 / DSM 579 / HB8).